Here is a 366-residue protein sequence, read N- to C-terminus: tRNA 2-selenouridine synthase (366 aa).

The Rhodanese domain occupies 12 to 135; it reads FLNDVPMMDA…MRTFLLDTLH (124 aa). The active-site S-selanylcysteine intermediate is the C95.

It belongs to the SelU family. In terms of assembly, monomer.

It carries out the reaction 5-methylaminomethyl-2-thiouridine(34) in tRNA + selenophosphate + (2E)-geranyl diphosphate + H2O + H(+) = 5-methylaminomethyl-2-selenouridine(34) in tRNA + (2E)-thiogeraniol + phosphate + diphosphate. The enzyme catalyses 5-methylaminomethyl-2-thiouridine(34) in tRNA + (2E)-geranyl diphosphate = 5-methylaminomethyl-S-(2E)-geranyl-thiouridine(34) in tRNA + diphosphate. The catalysed reaction is 5-methylaminomethyl-S-(2E)-geranyl-thiouridine(34) in tRNA + selenophosphate + H(+) = 5-methylaminomethyl-2-(Se-phospho)selenouridine(34) in tRNA + (2E)-thiogeraniol. It catalyses the reaction 5-methylaminomethyl-2-(Se-phospho)selenouridine(34) in tRNA + H2O = 5-methylaminomethyl-2-selenouridine(34) in tRNA + phosphate. In terms of biological role, involved in the post-transcriptional modification of the uridine at the wobble position (U34) of tRNA(Lys), tRNA(Glu) and tRNA(Gln). Catalyzes the conversion of 2-thiouridine (S2U-RNA) to 2-selenouridine (Se2U-RNA). Acts in a two-step process involving geranylation of 2-thiouridine (S2U) to S-geranyl-2-thiouridine (geS2U) and subsequent selenation of the latter derivative to 2-selenouridine (Se2U) in the tRNA chain. In Pseudomonas syringae pv. syringae (strain B728a), this protein is tRNA 2-selenouridine synthase.